The primary structure comprises 220 residues: Pyridoxine/pyridoxamine 5'-phosphate oxidase (220 aa).

Residues 13 to 16 and Lys77 contribute to the substrate site; that span reads RVEY. Residues 72–77, 87–88, Lys94, and Gln116 each bind FMN; these read RTVLCK and FT. Residues Tyr134, Arg138, and Ser142 each coordinate substrate. FMN is bound by residues 151 to 152 and Trp197; that span reads QS. Position 203-205 (203-205) interacts with substrate; sequence RLH. Arg207 lines the FMN pocket.

This sequence belongs to the pyridoxamine 5'-phosphate oxidase family. As to quaternary structure, homodimer. It depends on FMN as a cofactor.

It carries out the reaction pyridoxamine 5'-phosphate + O2 + H2O = pyridoxal 5'-phosphate + H2O2 + NH4(+). The enzyme catalyses pyridoxine 5'-phosphate + O2 = pyridoxal 5'-phosphate + H2O2. It functions in the pathway cofactor metabolism; pyridoxal 5'-phosphate salvage; pyridoxal 5'-phosphate from pyridoxamine 5'-phosphate: step 1/1. The protein operates within cofactor metabolism; pyridoxal 5'-phosphate salvage; pyridoxal 5'-phosphate from pyridoxine 5'-phosphate: step 1/1. Functionally, catalyzes the oxidation of either pyridoxine 5'-phosphate (PNP) or pyridoxamine 5'-phosphate (PMP) into pyridoxal 5'-phosphate (PLP). The protein is Pyridoxine/pyridoxamine 5'-phosphate oxidase of Mycolicibacterium paratuberculosis (strain ATCC BAA-968 / K-10) (Mycobacterium paratuberculosis).